Here is a 1093-residue protein sequence, read N- to C-terminus: Carbamoyl phosphate synthase large chain (1093 aa).

Residues 1-412 (MPRRNDIRKI…SLMKALRSLE (412 aa)) are carboxyphosphate synthetic domain. Positions 139, 179, 185, 186, 218, 220, 225, 251, 252, 253, 295, and 309 each coordinate ATP. The ATP-grasp 1 domain maps to 143–338 (KDAMTRIGLD…IAKIAAKLAV (196 aa)). Mg(2+) is bound by residues Q295, E309, and N311. Mn(2+) is bound by residues Q295, E309, and N311. The interval 413–560 (TGKRVGAEVL…YSSYEEEDEA (148 aa)) is oligomerization domain. Residues 561–952 (PQTDKRKVII…AFAKAQLSAG (392 aa)) are carbamoyl phosphate synthetic domain. The ATP-grasp 2 domain occupies 689–880 (GKLLEQLQIP…LAKIASRLMT (192 aa)). ATP contacts are provided by R725, H764, L766, E771, G796, I797, H798, S799, Q839, and E851. The Mg(2+) site is built by Q839, E851, and N853. Residues Q839, E851, and N853 each contribute to the Mn(2+) site. One can recognise an MGS-like domain in the interval 953–1093 (LILPSSGTVF…QLLHAGHAVK (141 aa)). Residues 953–1093 (LILPSSGTVF…QLLHAGHAVK (141 aa)) form an allosteric domain region.

Belongs to the CarB family. Composed of two chains; the small (or glutamine) chain promotes the hydrolysis of glutamine to ammonia, which is used by the large (or ammonia) chain to synthesize carbamoyl phosphate. Tetramer of heterodimers (alpha,beta)4. Requires Mg(2+) as cofactor. It depends on Mn(2+) as a cofactor.

It catalyses the reaction hydrogencarbonate + L-glutamine + 2 ATP + H2O = carbamoyl phosphate + L-glutamate + 2 ADP + phosphate + 2 H(+). The catalysed reaction is hydrogencarbonate + NH4(+) + 2 ATP = carbamoyl phosphate + 2 ADP + phosphate + 2 H(+). It functions in the pathway amino-acid biosynthesis; L-arginine biosynthesis; carbamoyl phosphate from bicarbonate: step 1/1. Its pathway is pyrimidine metabolism; UMP biosynthesis via de novo pathway; (S)-dihydroorotate from bicarbonate: step 1/3. Its function is as follows. Large subunit of the glutamine-dependent carbamoyl phosphate synthetase (CPSase). CPSase catalyzes the formation of carbamoyl phosphate from the ammonia moiety of glutamine, carbonate, and phosphate donated by ATP, constituting the first step of 2 biosynthetic pathways, one leading to arginine and/or urea and the other to pyrimidine nucleotides. The large subunit (synthetase) binds the substrates ammonia (free or transferred from glutamine from the small subunit), hydrogencarbonate and ATP and carries out an ATP-coupled ligase reaction, activating hydrogencarbonate by forming carboxy phosphate which reacts with ammonia to form carbamoyl phosphate. The protein is Carbamoyl phosphate synthase large chain of Acidobacterium capsulatum (strain ATCC 51196 / DSM 11244 / BCRC 80197 / JCM 7670 / NBRC 15755 / NCIMB 13165 / 161).